A 294-amino-acid chain; its full sequence is ATP synthase gamma chain (294 aa).

It belongs to the ATPase gamma chain family. In terms of assembly, F-type ATPases have 2 components, CF(1) - the catalytic core - and CF(0) - the membrane proton channel. CF(1) has five subunits: alpha(3), beta(3), gamma(1), delta(1), epsilon(1). CF(0) has three main subunits: a, b and c.

The protein resides in the cell inner membrane. Functionally, produces ATP from ADP in the presence of a proton gradient across the membrane. The gamma chain is believed to be important in regulating ATPase activity and the flow of protons through the CF(0) complex. This Mesorhizobium japonicum (strain LMG 29417 / CECT 9101 / MAFF 303099) (Mesorhizobium loti (strain MAFF 303099)) protein is ATP synthase gamma chain.